We begin with the raw amino-acid sequence, 63 residues long: Large ribosomal subunit protein bL33m (63 aa).

Belongs to the bacterial ribosomal protein bL33 family.

The protein localises to the mitochondrion. The polypeptide is Large ribosomal subunit protein bL33m (mrpl33) (Dictyostelium discoideum (Social amoeba)).